The primary structure comprises 301 residues: UDP-N-acetylenolpyruvoylglucosamine reductase (301 aa).

Residues 27–194 (RVGGPADVVF…LDAIFEGTPD (168 aa)) form the FAD-binding PCMH-type domain. Arginine 172 is a catalytic residue. Residue serine 223 is the Proton donor of the active site. Glutamate 293 is a catalytic residue.

The protein belongs to the MurB family. The cofactor is FAD.

Its subcellular location is the cytoplasm. The catalysed reaction is UDP-N-acetyl-alpha-D-muramate + NADP(+) = UDP-N-acetyl-3-O-(1-carboxyvinyl)-alpha-D-glucosamine + NADPH + H(+). The protein operates within cell wall biogenesis; peptidoglycan biosynthesis. Cell wall formation. The protein is UDP-N-acetylenolpyruvoylglucosamine reductase of Caulobacter vibrioides (strain NA1000 / CB15N) (Caulobacter crescentus).